The primary structure comprises 142 residues: uncharacterized protein (142 aa).

N-linked (GlcNAc...) asparagine; by host glycans are attached at residues Asn-29 and Asn-67. The helical transmembrane segment at 88–108 (VFYLGYPVIFIIGVTYFSIIA) threads the bilayer.

Its subcellular location is the membrane. This is an uncharacterized protein from Acanthamoeba polyphaga mimivirus (APMV).